The primary structure comprises 1272 residues: Magnesium-chelatase subunit H (1272 aa).

It belongs to the Mg-chelatase subunit H family.

It carries out the reaction protoporphyrin IX + Mg(2+) + ATP + H2O = Mg-protoporphyrin IX + ADP + phosphate + 3 H(+). The protein operates within porphyrin-containing compound metabolism; bacteriochlorophyll biosynthesis (light-independent). In terms of biological role, involved in bacteriochlorophyll pigment biosynthesis; introduces a magnesium ion into protoporphyrin IX to yield Mg-protoroporphyrin IX. The chain is Magnesium-chelatase subunit H (bchH) from Chlorobaculum parvum (strain DSM 263 / NCIMB 8327) (Chlorobium vibrioforme subsp. thiosulfatophilum).